The chain runs to 372 residues: Protein phosphatase Mn(2+)-dependent 1K (372 aa).

Residues 1–29 (MSTAALLTLVRSGGNQVRRRVLLRARGLQ) constitute a mitochondrion transit peptide. The tract at residues 46-61 (KWSRFDPDGSGRPATW) is critical for association with the BCKDH complex. Residues 94–346 (NVGSASQIGK…DNTTAVVVPF (253 aa)) enclose the PPM-type phosphatase domain. Mn(2+) is bound by residues Asp127 and Gly128. Ser248 is subject to Phosphoserine. Positions 298 and 337 each coordinate Mn(2+).

It belongs to the PP2C family. Monomer. Interacts with E1 and E2 components of the branched-chain alpha-ketoacid dehydrogenase (BCKDH) complex; this interaction requires colocalization in mitochondria. Interacts with BCKDHA but not with BCKDHB of the E1 component. Interacts with the 24-meric E2 core composed of DBT monomers with a 24:1 stoichiometry; the N-terminal region (residues 49-61) of PPM1K and C-terminal linker of the lipoyl domain of DBT (residues 145-160) are critical for this interaction, whereas the lipoyl prosthetic group is dispensable. Competes with BCKDK for binding to the E2 core; this interaction is modulated by branched-chain alpha-keto acids. At steady state, BCKDH holoenzyme preferentially binds BCKDK and BCKDHA is phosphorylated. In response to high levels of branched-chain alpha-keto acids, the inhibitory BCKDK is replaced by activating PPM1K leading to BCKDHA dephosphorylation and BCAA degradation. Mn(2+) is required as a cofactor.

The protein resides in the mitochondrion matrix. The enzyme catalyses O-phospho-L-seryl-[3-methyl-2-oxobutanoate dehydrogenase] + H2O = L-seryl-[3-methyl-2-oxobutanoate dehydrogenase] + phosphate. The catalysed reaction is O-phospho-L-seryl-[protein] + H2O = L-seryl-[protein] + phosphate. It participates in protein modification. In terms of biological role, serine/threonine-protein phosphatase component of macronutrients metabolism. Forms a functional kinase and phosphatase pair with BCKDK, serving as a metabolic regulatory node that coordinates branched-chain amino acids (BCAAs) with glucose and lipid metabolism via two distinct phosphoprotein targets: mitochondrial BCKDHA subunit of the branched-chain alpha-ketoacid dehydrogenase (BCKDH) complex and cytosolic ACLY, a lipogenic enzyme of Krebs cycle. At high levels of branched-chain ketoacids, dephosphorylates and activates mitochondrial BCKDH complex, a multisubunit complex consisting of three multimeric components each involved in different steps of BCAA catabolism: E1 composed of BCKDHA and BCKDHB, E2 core composed of DBT monomers, and E3 composed of DLD monomers. Tightly associates with the E2 component of BCKDH complex and dephosphorylates BCKDHA on Ser-347. Regulates the reversible phosphorylation of ACLY in response to changes in cellular carbohydrate abundance such as occurs during fasting to feeding metabolic transition. At fasting state, appears to dephosphorylate ACLY on Ser-455 and inactivate it. Refeeding stimulates MLXIPL/ChREBP transcription factor, leading to increased BCKDK to PPM1K expression ratio, phosphorylation and activation of ACLY that ultimately results in the generation of malonyl-CoA and oxaloacetate immediate substrates of de novo lipogenesis and gluconeogenesis, respectively. Recognizes phosphosites having SxS or RxxS motifs and strictly depends on Mn(2+) ions for the phosphatase activity. Regulates Ca(2+)-induced opening of mitochondrial transition pore and apoptotic cell death. In Bos taurus (Bovine), this protein is Protein phosphatase Mn(2+)-dependent 1K (PPM1K).